A 37-amino-acid chain; its full sequence is Large ribosomal subunit protein bL36 (37 aa).

It belongs to the bacterial ribosomal protein bL36 family.

This is Large ribosomal subunit protein bL36 from Leptospira interrogans serogroup Icterohaemorrhagiae serovar Lai (strain 56601).